We begin with the raw amino-acid sequence, 426 residues long: Cell adhesion molecule CEACAM16 (426 aa).

A signal peptide spans 1 to 22 (MKMPLTWYSWFLLSAWILNTGA). Asn-38 carries an N-linked (GlcNAc...) asparagine glycan. A disordered region spans residues 77 to 96 (ETPGPAHTGREAVRPDGSLD). The segment covering 84 to 95 (TGREAVRPDGSL) has biased composition (basic and acidic residues). Ig-like C2-type domains lie at 134–219 (PPTV…LNLT) and 224–310 (PERV…ASVV). Cys-155 and Cys-202 are disulfide-bonded. The N-linked (GlcNAc...) asparagine glycan is linked to Asn-217. Cys-253 and Cys-294 form a disulfide bridge.

The protein belongs to the immunoglobulin superfamily. CEA family. As to quaternary structure, homooligomer; can for homodimers and homotetramers. Interacts with TECTA and TECTB. As to expression, expressed in cochlear outer hair cells (OHC).

It is found in the secreted. Required for proper hearing, plays a role in maintaining the integrity of the tectorial membrane. The sequence is that of Cell adhesion molecule CEACAM16 from Mus musculus (Mouse).